Reading from the N-terminus, the 227-residue chain is YEATS domain-containing protein 4 (227 aa).

The region spanning 15-158 (RVKGVTIVKP…AMMQQLLTTS (144 aa)) is the YEATS domain. A Glycyl lysine isopeptide (Lys-Gly) (interchain with G-Cter in SUMO2) cross-link involves residue lysine 37. The segment at 93 to 97 (WGEFE) is diacetylated histone H3 binding. The tract at residues 163 to 227 (LGAYKHETEF…LEEDDQTKDI (65 aa)) is interaction with MLLT10. Residues 168 to 227 (HETEFAELEVKTREKLEAAKKKTSFEIAELKERLKASRETINCLKNEIRKLEEDDQTKDI) form an interaction with TACC1 region. Positions 178–226 (KTREKLEAAKKKTSFEIAELKERLKASRETINCLKNEIRKLEEDDQTKD) form a coiled coil.

Component of numerous complexes with chromatin remodeling and histone acetyltransferase activity. Component of the NuA4 histone acetyltransferase complex which contains the catalytic subunit KAT5/TIP60 and the subunits EP400, TRRAP/PAF400, BRD8/SMAP, EPC1, DMAP1/DNMAP1, RUVBL1/TIP49, RUVBL2, ING3, actin, ACTL6A/BAF53A, MORF4L1/MRG15, MORF4L2/MRGX, MRGBP, YEATS4/GAS41, VPS72/YL1 and MEAF6. The NuA4 complex interacts with MYC and the adenovirus E1A protein. Component of a NuA4-related complex which contains EP400, TRRAP/PAF400, SRCAP, BRD8/SMAP, EPC1, DMAP1/DNMAP1, RUVBL1/TIP49, RUVBL2, actin, ACTL6A/BAF53A, VPS72 and YEATS4/GAS41. Interacts with MLLT10/AF10. Also interacts with the SWI/SNF component SMARCB1/BAF47, TACC1 and TACC2, and the nuclear matrix protein NUMA1.

The protein resides in the nucleus. In terms of biological role, chromatin reader component of the NuA4 histone acetyltransferase (HAT) complex, a complex involved in transcriptional activation of select genes principally by acetylation of nucleosomal histones H4 and H2A. Specifically recognizes and binds acylated histone H3, with a preference for histone H3 diacetylated at 'Lys-18' and 'Lys-27' (H3K18ac and H3K27ac) or histone H3 diacetylated at 'Lys-14' and 'Lys-27' (H3K14ac and H3K27ac). Also able to recognize and bind crotonylated histone H3. May also recognize and bind histone H3 succinylated at 'Lys-122' (H3K122succ); additional evidences are however required to confirm this result in vivo. Plays a key role in histone variant H2AZ1/H2A.Z deposition into specific chromatin regions: recognizes and binds H3K14ac and H3K27ac on the promoters of actively transcribed genes and recruits NuA4-related complex to deposit H2AZ1/H2A.Z. H2AZ1/H2A.Z deposition is required for maintenance of embryonic stem cell. This chain is YEATS domain-containing protein 4, found in Mus musculus (Mouse).